Consider the following 145-residue polypeptide: Ribosomal RNA large subunit methyltransferase H (145 aa).

S-adenosyl-L-methionine is bound by residues Leu-64, Gly-93, and 112-117 (LSALTF).

It belongs to the RNA methyltransferase RlmH family. As to quaternary structure, homodimer.

The protein resides in the cytoplasm. It catalyses the reaction pseudouridine(1915) in 23S rRNA + S-adenosyl-L-methionine = N(3)-methylpseudouridine(1915) in 23S rRNA + S-adenosyl-L-homocysteine + H(+). Specifically methylates the pseudouridine at position 1915 (m3Psi1915) in 23S rRNA. This Prochlorococcus marinus (strain SARG / CCMP1375 / SS120) protein is Ribosomal RNA large subunit methyltransferase H.